The primary structure comprises 131 residues: MATVPTRSGSPRQLTTKQTGDAWEVQARRWLEGKGLRFVAANVNERGGEIDLIMREGRTTVFVEVRYRRSALYGGAAASVTRSKQHKLLQTARLWLARHNGSFDTVDCRFDVVAFTGNEVEWIKDTFNDHS.

Over residues 1 to 19 (MATVPTRSGSPRQLTTKQT) the composition is skewed to polar residues. Positions 1 to 20 (MATVPTRSGSPRQLTTKQTG) are disordered.

Belongs to the UPF0102 family.

This Escherichia coli O157:H7 protein is UPF0102 protein YraN.